We begin with the raw amino-acid sequence, 432 residues long: Adenosylhomocysteinase (432 aa).

Residue serine 2 is modified to N-acetylserine. Substrate-binding residues include threonine 57, aspartate 131, and glutamate 156. Serine 183 is modified (phosphoserine). The interval 183–350 (SVTKSKFDNL…EGRLVNLGCA (168 aa)) is NAD binding. Residues lysine 186 and aspartate 190 each contribute to the substrate site. An N6-(2-hydroxyisobutyryl)lysine modification is found at lysine 186. A Phosphotyrosine modification is found at tyrosine 193.

It belongs to the adenosylhomocysteinase family. In terms of assembly, homotetramer. Interaction with AHCYL1. NAD(+) serves as cofactor.

It is found in the cytoplasm. It localises to the melanosome. The protein resides in the nucleus. Its subcellular location is the endoplasmic reticulum. The catalysed reaction is S-adenosyl-L-homocysteine + H2O = L-homocysteine + adenosine. The protein operates within amino-acid biosynthesis; L-homocysteine biosynthesis; L-homocysteine from S-adenosyl-L-homocysteine: step 1/1. In terms of biological role, catalyzes the hydrolysis of S-adenosyl-L-homocysteine to form adenosine and homocysteine. Binds copper ions. In Bos taurus (Bovine), this protein is Adenosylhomocysteinase (AHCY).